The primary structure comprises 238 residues: Ribosomal RNA small subunit methyltransferase G (238 aa).

Residues Gly-79, Phe-84, 102-104, 130-131, and Arg-149 each bind S-adenosyl-L-methionine; these read EAT and IE.

The protein belongs to the methyltransferase superfamily. RNA methyltransferase RsmG family.

It localises to the cytoplasm. Specifically methylates the N7 position of a guanine in 16S rRNA. The protein is Ribosomal RNA small subunit methyltransferase G of Chloroflexus aggregans (strain MD-66 / DSM 9485).